Here is a 93-residue protein sequence, read N- to C-terminus: MKLVTIFLLVTISLCSYSATAFLINKVPLPVDKLAPLPLDNILPFMDPLKLLLKTLGISVEHLVEGLRKCVNELGPEASEAVKKLLEALSHLV.

The first 21 residues, 1-21 (MKLVTIFLLVTISLCSYSATA), serve as a signal peptide directing secretion.

This sequence belongs to the secretoglobin family. UGRP subfamily. Homodimer; disulfide-linked. Monomer. Interacts with APOA1. Highly expressed in lung and trachea. Detected throughout the airway epithelium in lung, with slightly higher expression in large airways. Found in lung submucosal gland acinus where it localizes to serous-like cells. Probably expressed in club cells of the bronchioles. Not detected in other tissues tested.

The protein resides in the secreted. Its function is as follows. Secreted cytokine-like protein. Binds to the scavenger receptor MARCO. Can also bind to pathogens including the Gram-positive bacterium L.monocytogenes, the Gram-negative bacterium P.aeruginosa, and yeast. Strongly inhibits phospholipase A2 (PLA2G1B) activity. Seems to have anti-inflammatory effects in respiratory epithelium. Also has anti-fibrotic activity in lung. May play a role in fetal lung development and maturation. Promotes branching morphogenesis during early stages of lung development. In the pituitary, may inhibit production of follicle-stimulating hormone (FSH) and luteinizing hormone (LH). The protein is Secretoglobin family 3A member 2 (SCGB3A2) of Homo sapiens (Human).